A 241-amino-acid polypeptide reads, in one-letter code: Probable phosphatase Cthe_0111 (241 aa).

Residues His-8, His-10, His-16, His-41, Glu-74, His-102, His-132, Asp-192, and His-194 each coordinate Zn(2+).

The protein belongs to the PHP family. Zn(2+) serves as cofactor.

The protein is Probable phosphatase Cthe_0111 of Acetivibrio thermocellus (strain ATCC 27405 / DSM 1237 / JCM 9322 / NBRC 103400 / NCIMB 10682 / NRRL B-4536 / VPI 7372) (Clostridium thermocellum).